We begin with the raw amino-acid sequence, 326 residues long: tRNA uridine(34) hydroxylase (326 aa).

In terms of domain architecture, Rhodanese spans 123-217 (SDPDVLLVDT…YLEEVKQEES (95 aa)). Cysteine 177 (cysteine persulfide intermediate) is an active-site residue. The segment at 304-326 (VSQVILSRRTEKEDQRQAQNKKA) is disordered.

The protein belongs to the TrhO family.

It catalyses the reaction uridine(34) in tRNA + AH2 + O2 = 5-hydroxyuridine(34) in tRNA + A + H2O. In terms of biological role, catalyzes oxygen-dependent 5-hydroxyuridine (ho5U) modification at position 34 in tRNAs. The polypeptide is tRNA uridine(34) hydroxylase (Shewanella sediminis (strain HAW-EB3)).